The sequence spans 266 residues: Killer cell lectin-like receptor 6 (266 aa).

Topologically, residues Met-1–Gln-44 are cytoplasmic. Residues Leu-45–Val-66 form a helical; Signal-anchor for type II membrane protein membrane-spanning segment. The Extracellular segment spans residues Lys-67 to His-266. Asn-87 and Asn-104 each carry an N-linked (GlcNAc...) asparagine glycan. The C-type lectin domain maps to Gly-143–Leu-261. 4 disulfides stabilise this stretch: Cys-149/Cys-154, Cys-167/Cys-255, Cys-171/Cys-257, and Cys-236/Cys-249.

As to quaternary structure, homodimer; disulfide-linked.

It localises to the membrane. In terms of biological role, receptor on natural killer (NK) cells for class I MHC. The chain is Killer cell lectin-like receptor 6 (Klra6) from Mus musculus (Mouse).